Consider the following 247-residue polypeptide: Carboxy-S-adenosyl-L-methionine synthase (247 aa).

S-adenosyl-L-methionine is bound by residues Tyr40, 65 to 67 (GSS), 90 to 91 (DN), 122 to 123 (DI), Asn137, and Arg204.

This sequence belongs to the class I-like SAM-binding methyltransferase superfamily. Cx-SAM synthase family. As to quaternary structure, homodimer.

It carries out the reaction prephenate + S-adenosyl-L-methionine = carboxy-S-adenosyl-L-methionine + 3-phenylpyruvate + H2O. In terms of biological role, catalyzes the conversion of S-adenosyl-L-methionine (SAM) to carboxy-S-adenosyl-L-methionine (Cx-SAM). This chain is Carboxy-S-adenosyl-L-methionine synthase, found in Pseudomonas syringae pv. syringae (strain B728a).